Reading from the N-terminus, the 49-residue chain is Large ribosomal subunit protein bL33 (49 aa).

Belongs to the bacterial ribosomal protein bL33 family.

This is Large ribosomal subunit protein bL33 from Caldanaerobacter subterraneus subsp. tengcongensis (strain DSM 15242 / JCM 11007 / NBRC 100824 / MB4) (Thermoanaerobacter tengcongensis).